A 218-amino-acid polypeptide reads, in one-letter code: Cytochrome b6 (218 aa).

A helical membrane pass occupies residues 35-55 (IFYCLGGITLVCFLIQFATGF). C38 contributes to the heme c binding site. Heme b contacts are provided by H89 and H103. The next 3 membrane-spanning stretches (helical) occupy residues 93 to 113 (ASMM…TGGF), 119 to 139 (LTWV…VTGY), and 189 to 209 (LHTF…FLMI). Residues H190 and H205 each coordinate heme b.

This sequence belongs to the cytochrome b family. PetB subfamily. As to quaternary structure, the 4 large subunits of the cytochrome b6-f complex are cytochrome b6, subunit IV (17 kDa polypeptide, PetD), cytochrome f and the Rieske protein, while the 4 small subunits are PetG, PetL, PetM and PetN. The complex functions as a dimer. Requires heme b as cofactor. Heme c serves as cofactor.

The protein localises to the cellular thylakoid membrane. In terms of biological role, component of the cytochrome b6-f complex, which mediates electron transfer between photosystem II (PSII) and photosystem I (PSI), cyclic electron flow around PSI, and state transitions. The protein is Cytochrome b6 of Synechococcus sp. (strain WH7803).